The chain runs to 282 residues: uncharacterized protein (282 aa).

Positions Leu205–Ala277 form a coiled coil.

This is an uncharacterized protein from Treponema pallidum (strain Nichols).